We begin with the raw amino-acid sequence, 401 residues long: Argininosuccinate synthase (401 aa).

8 to 16 serves as a coordination point for ATP; it reads AYSGGLDTS. Tyrosine 87 contributes to the L-citrulline binding site. Glycine 117 contacts ATP. Residues threonine 119, asparagine 123, and aspartate 124 each coordinate L-aspartate. Asparagine 123 contacts L-citrulline. L-citrulline-binding residues include arginine 127, serine 175, glutamate 259, and tyrosine 271.

It belongs to the argininosuccinate synthase family. Type 1 subfamily. In terms of assembly, homotetramer.

It is found in the cytoplasm. The enzyme catalyses L-citrulline + L-aspartate + ATP = 2-(N(omega)-L-arginino)succinate + AMP + diphosphate + H(+). It functions in the pathway amino-acid biosynthesis; L-arginine biosynthesis; L-arginine from L-ornithine and carbamoyl phosphate: step 2/3. The chain is Argininosuccinate synthase from Pseudarthrobacter chlorophenolicus (strain ATCC 700700 / DSM 12829 / CIP 107037 / JCM 12360 / KCTC 9906 / NCIMB 13794 / A6) (Arthrobacter chlorophenolicus).